The primary structure comprises 301 residues: Inosose dehydratase (301 aa).

This sequence belongs to the IolE/MocC family. Requires glutathione as cofactor. The cofactor is Co(2+). It depends on Mn(2+) as a cofactor.

The catalysed reaction is scyllo-inosose = 3D-3,5/4-trihydroxycyclohexane-1,2-dione + H2O. The protein operates within polyol metabolism; myo-inositol degradation into acetyl-CoA; acetyl-CoA from myo-inositol: step 2/7. Functionally, catalyzes the dehydration of inosose (2-keto-myo-inositol, 2KMI or 2,4,6/3,5-pentahydroxycyclohexanone) to 3D-(3,5/4)-trihydroxycyclohexane-1,2-dione (D-2,3-diketo-4-deoxy-epi-inositol). The protein is Inosose dehydratase of Lacticaseibacillus casei (strain BL23) (Lactobacillus casei).